The primary structure comprises 213 residues: Guanylate kinase (213 aa).

Positions 12–190 constitute a Guanylate kinase-like domain; sequence GLCLVVAAPS…AIDQVRTILH (179 aa). Position 19–26 (19–26) interacts with ATP; the sequence is APSGAGKS.

This sequence belongs to the guanylate kinase family.

It localises to the cytoplasm. It catalyses the reaction GMP + ATP = GDP + ADP. Essential for recycling GMP and indirectly, cGMP. This is Guanylate kinase from Granulibacter bethesdensis (strain ATCC BAA-1260 / CGDNIH1).